The following is a 298-amino-acid chain: Tyrosine recombinase XerC (298 aa).

Residues 2 to 88 form the Core-binding (CB) domain; sequence TDLHTDVERY…ALRSFFDWLV (87 aa). In terms of domain architecture, Tyr recombinase spans 109-288; sequence HLPKNIDVDD…DFQHLASVYD (180 aa). Active-site residues include Arg148, Lys172, His240, Arg243, and His266. Residue Tyr275 is the O-(3'-phospho-DNA)-tyrosine intermediate of the active site.

This sequence belongs to the 'phage' integrase family. XerC subfamily. In terms of assembly, forms a cyclic heterotetrameric complex composed of two molecules of XerC and two molecules of XerD, in which XerC interacts with XerD via its C-terminal region, XerD interacts with XerC via its C-terminal region and so on.

It is found in the cytoplasm. With respect to regulation, ftsK may regulate the catalytic switch between XerC and XerD in the heterotetrameric complex during the two steps of the recombination process. Its function is as follows. Site-specific tyrosine recombinase, which acts by catalyzing the cutting and rejoining of the recombining DNA molecules. Binds cooperatively to specific DNA consensus sequences that are separated from XerD binding sites by a short central region, forming the heterotetrameric XerC-XerD complex that recombines DNA substrates. The complex is essential to convert dimers of the bacterial chromosome into monomers to permit their segregation at cell division. It also contributes to the segregational stability of plasmids. In the complex XerC specifically exchanges the top DNA strands. In Escherichia coli O45:K1 (strain S88 / ExPEC), this protein is Tyrosine recombinase XerC.